The primary structure comprises 448 residues: Binary larvicide subunit BinB (448 aa).

The tract at residues 19-200 (TNYPLNTTPT…FVNSSFYAAA (182 aa)) is beta-trefoil domain. An intrachain disulfide couples cysteine 67 to cysteine 161. Residues 226-407 (PKDAVRAVKG…APITNPLTLT (182 aa)) form a probable pore-forming domain region.

Belongs to the toxin_10 family. As to quaternary structure, forms a heterodimer with BinA. Processed by proteases extracted from mosquito larval gut.

It is found in the spore. It localises to the perispore. Component of a binary toxin active against Culex and some Aedes mosquito larvae. This subunit is responsible for localized binding to specific regions of the host larval gut. The individual subunits are not toxic. BinAB and this subunit alone bind to the gastric caecum and posterior midgut of C.quinquefasciatus larvae. Binary toxin internalization into host gut cells requires both proteins. Does not bind to the midgut of Aedes aegypti. Toxic to Aedes atropalpus mosquito larvae; mortality towards both C.quinquefasciatus and A.atropalpus is maximal by 48 hours. A.aegypti is not very susceptible to this toxin. Binding component of binary toxin. The 51 kDa polypeptide acts synergetically with the 42 kDa polypeptide for expression of a larvicidal toxin. The protein is Binary larvicide subunit BinB of Lysinibacillus sphaericus (Bacillus sphaericus).